The primary structure comprises 408 residues: Na(+)-translocating NADH-quinone reductase subunit F (408 aa).

Residues 4–24 (VYLGVGMFTAIVLVLVLVILF) form a helical membrane-spanning segment. Residues 33 to 127 (GDIIIGINGD…DMEIELDEEI (95 aa)) enclose the 2Fe-2S ferredoxin-type domain. Residues cysteine 70, cysteine 76, cysteine 79, and cysteine 111 each contribute to the [2Fe-2S] cluster site. Residues 130–270 (IKKWECDVIS…SGPFGEFFAK (141 aa)) enclose the FAD-binding FR-type domain.

The protein belongs to the NqrF family. As to quaternary structure, composed of six subunits; NqrA, NqrB, NqrC, NqrD, NqrE and NqrF. [2Fe-2S] cluster is required as a cofactor. It depends on FAD as a cofactor.

The protein resides in the cell inner membrane. It carries out the reaction a ubiquinone + n Na(+)(in) + NADH + H(+) = a ubiquinol + n Na(+)(out) + NAD(+). Functionally, NQR complex catalyzes the reduction of ubiquinone-1 to ubiquinol by two successive reactions, coupled with the transport of Na(+) ions from the cytoplasm to the periplasm. The first step is catalyzed by NqrF, which accepts electrons from NADH and reduces ubiquinone-1 to ubisemiquinone by a one-electron transfer pathway. The sequence is that of Na(+)-translocating NADH-quinone reductase subunit F from Shewanella denitrificans (strain OS217 / ATCC BAA-1090 / DSM 15013).